We begin with the raw amino-acid sequence, 136 residues long: Large ribosomal subunit protein uL16 (136 aa).

It belongs to the universal ribosomal protein uL16 family. In terms of assembly, part of the 50S ribosomal subunit.

Binds 23S rRNA and is also seen to make contacts with the A and possibly P site tRNAs. The protein is Large ribosomal subunit protein uL16 of Aliivibrio salmonicida (strain LFI1238) (Vibrio salmonicida (strain LFI1238)).